The following is a 106-amino-acid chain: Toxin-like structure LSTX-D5 (106 aa).

An N-terminal signal peptide occupies residues 1 to 20 (MMKVLVVVALLVTLISYSSS). Residues 21–41 (EGIDDLETDELLSLMANEQTR) constitute a propeptide that is removed on maturation. 4 disulfide bridges follow: C45–C60, C52–C69, C59–C85, and C71–C83.

The protein belongs to the neurotoxin 19 (CSTX) family. 02 (D7) subfamily. Expressed by the venom gland.

Its subcellular location is the secreted. The protein is Toxin-like structure LSTX-D5 of Lycosa singoriensis (Wolf spider).